Here is a 102-residue protein sequence, read N- to C-terminus: Small ribosomal subunit protein uS14 (102 aa).

The protein belongs to the universal ribosomal protein uS14 family. Part of the 30S ribosomal subunit. Contacts proteins S3 and S10.

Binds 16S rRNA, required for the assembly of 30S particles and may also be responsible for determining the conformation of the 16S rRNA at the A site. This chain is Small ribosomal subunit protein uS14, found in Wolbachia pipientis subsp. Culex pipiens (strain wPip).